We begin with the raw amino-acid sequence, 380 residues long: Putative glutamate--cysteine ligase 2-1 (380 aa).

Belongs to the glutamate--cysteine ligase type 2 family. YbdK subfamily.

The catalysed reaction is L-cysteine + L-glutamate + ATP = gamma-L-glutamyl-L-cysteine + ADP + phosphate + H(+). Functionally, ATP-dependent carboxylate-amine ligase which exhibits weak glutamate--cysteine ligase activity. The chain is Putative glutamate--cysteine ligase 2-1 from Mycolicibacterium vanbaalenii (strain DSM 7251 / JCM 13017 / BCRC 16820 / KCTC 9966 / NRRL B-24157 / PYR-1) (Mycobacterium vanbaalenii).